A 771-amino-acid polypeptide reads, in one-letter code: Putative 8-amino-7-oxononanoate synthase 2 (771 aa).

The tract at residues 1–418 (MPTGLGYDFL…TVKAAELGEI (418 aa)) is unknown. Arg-407 is a binding site for substrate. The tract at residues 419 to 771 (VLLGTNSYLG…EDLTPQGAAL (353 aa)) is KAPA synthase. 485 to 486 (GY) is a pyridoxal 5'-phosphate binding site. Substrate is bound at residue His-510. Pyridoxal 5'-phosphate-binding positions include Ser-556 and 581–584 (DESH). Lys-615 carries the N6-(pyridoxal phosphate)lysine modification.

This sequence in the C-terminal section; belongs to the class-II pyridoxal-phosphate-dependent aminotransferase family. BioF subfamily. Pyridoxal 5'-phosphate is required as a cofactor.

It catalyses the reaction 6-carboxyhexanoyl-[ACP] + L-alanine + H(+) = (8S)-8-amino-7-oxononanoate + holo-[ACP] + CO2. Its function is as follows. Catalyzes the decarboxylative condensation of pimeloyl-[acyl-carrier protein] and L-alanine to produce 8-amino-7-oxononanoate (AON), [acyl-carrier protein], and carbon dioxide. The polypeptide is Putative 8-amino-7-oxononanoate synthase 2 (bioF2) (Mycobacterium tuberculosis (strain CDC 1551 / Oshkosh)).